A 1059-amino-acid chain; its full sequence is MPKRSDIKKIMVIGSGPIIIGQAAEFDYAGTQACLALKEEGYSVVLVNSNPATIMTDKEIADKVYIEPITLEFVTRILRKERPDALLPTLGGQTGLNMAMELSKAGILDELGVELLGTKLSAIDQAEDRDLFKQLMEELEQPIPESEIVNTVEEAVAFATEIGYPVIVRPAFTLGGTGGGMCANEEELREIAENGLKLSPVTQCLIERSIAGFKEIEYEVMRDAEDNALVVCNMENFDPVGIHTGDSIVFAPTQTLSDIENQMLRDASLKIIRALKIEGGCNVQLALDPHSFKYYVIEVNPRVSRSSALASKATGYPIAKLAAKIAVGLTLDEMINPVTGTTYAMFEPALDYVVAKIPRFPFDKFEHGERRLGTQMKATGEVMAIGRNIEESLLKACRSLEIGVYHNEMSELAEVTDDALVEKVVKAQDDRLFYISEAIRRGYTIEELSELTKIDIFFLDKLLHIFELEQELAAHVGDVDVLKEAKRNGFSDRKIADLWNQTANQVRATRLENNIVPVYKMVDTCAAEFESSTPYFYSTYEWENESIKSDKESVIVLGSGPIRIGQGVEFDYATVHSVKAIQAAGYEAIIMNSNPETVSTDFSVSDKLYFEPLTFEDVMNVIELEQPKGVVVQFGGQTAINLAEPLSKAGVKILGTQVADLDRAEDRDLFEQALKDLDIPQPPGQTATNEEEAVEAARKIGFPVLVRPSYVLGGRAMEIVENEDDLRSYMRTAVKASPDHPVLVDSYIIGRECEVDAISDGKDVLIPGIMEHIERAGVHSGDSMAVYPPQTLSKKIQETIADYTKRLAIGLNCIGMMNIQFVIKDETVYVIEVNPRASRTVPFLSKVTDIPMAQVATNLILGKSLAEQGYKDGLYPESNHVHVKAPVFSFTKLAQVDSLLGPEMKSTGEVMGTDVTLEKALYKAFEASYLHLPTFGNVIFTIHDDTKEEALDLARRFDAIGYGIYATEGTAKFLNEHGVHATLVNKLGENDDNDIPALVRTGKAQAIINTVGNKRTYDEDGAAIRSSAIEAGIPLFTALDTADAMVRVLESRSFTTEAI.

A carboxyphosphate synthetic domain region spans residues 1–401; it reads MPKRSDIKKI…SLLKACRSLE (401 aa). ATP contacts are provided by arginine 129, arginine 169, glycine 175, glycine 176, arginine 208, isoleucine 210, glutamate 215, glycine 241, isoleucine 242, histidine 243, glutamine 284, and glutamate 298. The ATP-grasp 1 domain occupies 133–327; that stretch reads KQLMEELEQP…IAKLAAKIAV (195 aa). Mg(2+)-binding residues include glutamine 284, glutamate 298, and asparagine 300. Mn(2+) is bound by residues glutamine 284, glutamate 298, and asparagine 300. An oligomerization domain region spans residues 402-546; the sequence is IGVYHNEMSE…YSTYEWENES (145 aa). The carbamoyl phosphate synthetic domain stretch occupies residues 547 to 929; the sequence is IKSDKESVIV…ALYKAFEASY (383 aa). The region spanning 671-861 is the ATP-grasp 2 domain; that stretch reads EQALKDLDIP…MAQVATNLIL (191 aa). The ATP site is built by arginine 707, serine 746, isoleucine 748, glutamate 752, glycine 777, valine 778, histidine 779, serine 780, glutamine 820, and glutamate 832. Mg(2+)-binding residues include glutamine 820, glutamate 832, and asparagine 834. Positions 820, 832, and 834 each coordinate Mn(2+). In terms of domain architecture, MGS-like spans 930–1059; sequence LHLPTFGNVI…ESRSFTTEAI (130 aa). Residues 930–1059 are allosteric domain; it reads LHLPTFGNVI…ESRSFTTEAI (130 aa).

This sequence belongs to the CarB family. As to quaternary structure, composed of two chains; the small (or glutamine) chain promotes the hydrolysis of glutamine to ammonia, which is used by the large (or ammonia) chain to synthesize carbamoyl phosphate. Tetramer of heterodimers (alpha,beta)4. Requires Mg(2+) as cofactor. It depends on Mn(2+) as a cofactor.

It catalyses the reaction hydrogencarbonate + L-glutamine + 2 ATP + H2O = carbamoyl phosphate + L-glutamate + 2 ADP + phosphate + 2 H(+). The enzyme catalyses hydrogencarbonate + NH4(+) + 2 ATP = carbamoyl phosphate + 2 ADP + phosphate + 2 H(+). It functions in the pathway amino-acid biosynthesis; L-arginine biosynthesis; carbamoyl phosphate from bicarbonate: step 1/1. The protein operates within pyrimidine metabolism; UMP biosynthesis via de novo pathway; (S)-dihydroorotate from bicarbonate: step 1/3. Large subunit of the glutamine-dependent carbamoyl phosphate synthetase (CPSase). CPSase catalyzes the formation of carbamoyl phosphate from the ammonia moiety of glutamine, carbonate, and phosphate donated by ATP, constituting the first step of 2 biosynthetic pathways, one leading to arginine and/or urea and the other to pyrimidine nucleotides. The large subunit (synthetase) binds the substrates ammonia (free or transferred from glutamine from the small subunit), hydrogencarbonate and ATP and carries out an ATP-coupled ligase reaction, activating hydrogencarbonate by forming carboxy phosphate which reacts with ammonia to form carbamoyl phosphate. The polypeptide is Carbamoyl phosphate synthase large chain (Streptococcus thermophilus (strain ATCC BAA-250 / LMG 18311)).